The primary structure comprises 79 residues: Small ribosomal subunit protein bS16 (79 aa).

This sequence belongs to the bacterial ribosomal protein bS16 family.

The polypeptide is Small ribosomal subunit protein bS16 (Oleidesulfovibrio alaskensis (strain ATCC BAA-1058 / DSM 17464 / G20) (Desulfovibrio alaskensis)).